Reading from the N-terminus, the 72-residue chain is DNA-directed RNA polymerase subunit omega (72 aa).

The protein belongs to the RNA polymerase subunit omega family. In terms of assembly, the RNAP catalytic core consists of 2 alpha, 1 beta, 1 beta' and 1 omega subunit. When a sigma factor is associated with the core the holoenzyme is formed, which can initiate transcription.

The enzyme catalyses RNA(n) + a ribonucleoside 5'-triphosphate = RNA(n+1) + diphosphate. In terms of biological role, promotes RNA polymerase assembly. Latches the N- and C-terminal regions of the beta' subunit thereby facilitating its interaction with the beta and alpha subunits. The protein is DNA-directed RNA polymerase subunit omega of Staphylococcus aureus (strain Mu3 / ATCC 700698).